Reading from the N-terminus, the 306-residue chain is Tyrosine recombinase XerC (306 aa).

The 85-residue stretch at 10–94 folds into the Core-binding (CB) domain; sequence ARCHSYLQQF…AVKQWGEFLL (85 aa). The 180-residue stretch at 115–294 folds into the Tyr recombinase domain; the sequence is PLPKNIDVDS…DFQHLAKVYD (180 aa). Residues Arg154, Lys178, His246, Arg249, and His272 contribute to the active site. The active-site O-(3'-phospho-DNA)-tyrosine intermediate is Tyr281.

This sequence belongs to the 'phage' integrase family. XerC subfamily. In terms of assembly, forms a cyclic heterotetrameric complex composed of two molecules of XerC and two molecules of XerD.

It is found in the cytoplasm. Its function is as follows. Site-specific tyrosine recombinase, which acts by catalyzing the cutting and rejoining of the recombining DNA molecules. The XerC-XerD complex is essential to convert dimers of the bacterial chromosome into monomers to permit their segregation at cell division. It also contributes to the segregational stability of plasmids. This Shewanella oneidensis (strain ATCC 700550 / JCM 31522 / CIP 106686 / LMG 19005 / NCIMB 14063 / MR-1) protein is Tyrosine recombinase XerC.